A 914-amino-acid chain; its full sequence is Isoleucine--tRNA ligase (914 aa).

The short motif at 64-74 (PYANGNFHLGH) is the 'HIGH' region element. Glutamate 557 contacts L-isoleucyl-5'-AMP. Residues 598-602 (PMSKS) carry the 'KMSKS' region motif. Lysine 601 lines the ATP pocket. Zn(2+) is bound by residues cysteine 889, cysteine 892, cysteine 906, and cysteine 909.

It belongs to the class-I aminoacyl-tRNA synthetase family. IleS type 1 subfamily. As to quaternary structure, monomer. Zn(2+) is required as a cofactor.

It is found in the cytoplasm. It carries out the reaction tRNA(Ile) + L-isoleucine + ATP = L-isoleucyl-tRNA(Ile) + AMP + diphosphate. In terms of biological role, catalyzes the attachment of isoleucine to tRNA(Ile). As IleRS can inadvertently accommodate and process structurally similar amino acids such as valine, to avoid such errors it has two additional distinct tRNA(Ile)-dependent editing activities. One activity is designated as 'pretransfer' editing and involves the hydrolysis of activated Val-AMP. The other activity is designated 'posttransfer' editing and involves deacylation of mischarged Val-tRNA(Ile). The polypeptide is Isoleucine--tRNA ligase (Leptospira interrogans serogroup Icterohaemorrhagiae serovar copenhageni (strain Fiocruz L1-130)).